The sequence spans 413 residues: Putative F-box protein At3g23970 (413 aa).

Positions 1–42 (MNIPPELTFEVLVRLPLKSLARFRSVRKEWKLVIDSEFFRDC) constitute an F-box domain.

The protein is Putative F-box protein At3g23970 of Arabidopsis thaliana (Mouse-ear cress).